Reading from the N-terminus, the 425-residue chain is Exodeoxyribonuclease 7 large subunit (425 aa).

Belongs to the XseA family. Heterooligomer composed of large and small subunits.

Its subcellular location is the cytoplasm. The catalysed reaction is Exonucleolytic cleavage in either 5'- to 3'- or 3'- to 5'-direction to yield nucleoside 5'-phosphates.. In terms of biological role, bidirectionally degrades single-stranded DNA into large acid-insoluble oligonucleotides, which are then degraded further into small acid-soluble oligonucleotides. This Nocardia farcinica (strain IFM 10152) protein is Exodeoxyribonuclease 7 large subunit.